Here is a 120-residue protein sequence, read N- to C-terminus: NAD(P)H-quinone oxidoreductase subunit 3, chloroplastic (120 aa).

A run of 3 helical transmembrane segments spans residues 9-29, 64-84, and 88-108; these read IFWA…LISG, MFAL…PWAM, and VLGV…IVGS.

This sequence belongs to the complex I subunit 3 family. In terms of assembly, NDH is composed of at least 16 different subunits, 5 of which are encoded in the nucleus.

It is found in the plastid. It localises to the chloroplast thylakoid membrane. It catalyses the reaction a plastoquinone + NADH + (n+1) H(+)(in) = a plastoquinol + NAD(+) + n H(+)(out). The catalysed reaction is a plastoquinone + NADPH + (n+1) H(+)(in) = a plastoquinol + NADP(+) + n H(+)(out). In terms of biological role, NDH shuttles electrons from NAD(P)H:plastoquinone, via FMN and iron-sulfur (Fe-S) centers, to quinones in the photosynthetic chain and possibly in a chloroplast respiratory chain. The immediate electron acceptor for the enzyme in this species is believed to be plastoquinone. Couples the redox reaction to proton translocation, and thus conserves the redox energy in a proton gradient. In Gossypium barbadense (Sea Island cotton), this protein is NAD(P)H-quinone oxidoreductase subunit 3, chloroplastic.